A 36-amino-acid polypeptide reads, in one-letter code: Peptide POLARIS (36 aa).

It belongs to the POLARIS peptide family. In terms of tissue distribution, mostly expressed in the embryonic root from the heart stage and in the seedling primary and lateral root tips, especially in the columella initials and lateral root cap. Also detectable in aerial parts of the seedling, sepals and leaves, principally in vascular tissues of the lamina and petiole.

Functionally, required for correct root growth and vascular development, probably by modulating both cell division rate in meristems and cell elongation in roots. Negative regulator of the ethylene signaling pathway that modulates microtubule cytoskeleton dynamics and auxin transport and homeostasis, and possibly cytokinin signaling, thus influencing root growth and lateral root development. This is Peptide POLARIS (PLS) from Arabidopsis thaliana (Mouse-ear cress).